Here is a 168-residue protein sequence, read N- to C-terminus: Pleiotrophin (168 aa).

An N-terminal signal peptide occupies residues 1-32; that stretch reads MQTPQYLQQRRKFAAAFLAFIFILAAVDTAEA. 5 disulfide bridges follow: cysteine 47/cysteine 76, cysteine 55/cysteine 85, cysteine 62/cysteine 89, cysteine 99/cysteine 131, and cysteine 109/cysteine 141. 2 chondroitin sulfate binding regions span residues 92 to 99 and 123 to 131; these read KKQFGAEC and KRALHNADC. Positions 141–168 are disordered; sequence CGKLTKSKPQAESKKKKKEGKKQEKMLD. Residues 147–168 form a chondroitin sulfate A binding region; it reads SKPQAESKKKKKEGKKQEKMLD.

Interacts with ALK and NEK6. Interacts with PTPRZ1 (via chondroitin sulfate groups); promotes formation of homooligomers; oligomerization impairs tyrosine phosphatase activity. Forms a complex with PTPRZ1 and CTNNB1; this complex inactivates PTPRZ1 protein tyrosine phosphatase activity through PTN interaction and stimulates tyrosine phosphorylation of CTNNB1. Interacts with ITGB3 and ITGA5. Forms a complex with PTPRZ1 and integrin alpha-V/beta-3 (ITGAV:ITGB3) that stimulates endothelial cell migration through ITGB3 'Tyr-773' phosphorylation. Interacts with SDC3 (via heparan sulfate chains); this interaction mediates the neurite outgrowth-promoting signal from PTN to the cytoskeleton of growing neurites; this interaction mediates osteoblast recruitment. Interacts with GPC2 (via heparan sulfate); this interaction promotes neurite outgrowth through binding of PTN with chondroitin sulfate of proteoglycans, thereby releasing PTPRS of chondroitin sulfate proteoglycans (CSPGs) and leading to binding with heparan sulfate of GPC2. Post-translationally, phosphorylated by NEK6.

The protein localises to the secreted. Its function is as follows. Secreted growth factor that mediates its signal through cell-surface proteoglycan and non-proteoglycan receptors. Binds cell-surface proteoglycan receptor via their chondroitin sulfate (CS) groups. Thereby regulates many processes like cell proliferation, cell survival, cell growth, cell differentiation and cell migration in several tissues namely neuron and bone. Also plays a role in synaptic plasticity and learning-related behavior by inhibiting long-term synaptic potentiation. Binds PTPRZ1, leading to neutralization of the negative charges of the CS chains of PTPRZ1, inducing PTPRZ1 clustering, thereby causing the dimerization and inactivation of its phosphatase activity leading to increased tyrosine phosphorylation of each of the PTPRZ1 substrates like ALK, CTNNB1 or AFAP1L2 in order to activate the PI3K-AKT pathway. Through PTPRZ1 binding controls oligodendrocyte precursor cell differentiation by enhancing the phosphorylation of AFAP1L2 in order to activate the PI3K-AKT pathway. Forms a complex with PTPRZ1 and integrin alpha-V/beta-3 (ITGAV:ITGB3) that stimulates endothelial cell migration through SRC dephosphorylation and activation that consequently leads to ITGB3 'Tyr-773' phosphorylation. In adult hippocampus promotes dendritic arborization, spine development, and functional integration and connectivity of newborn granule neurons through ALK by activating AKT signaling pathway. Binds GPC2 and chondroitin sulfate proteoglycans (CSPGs) at the neuron surface, leading to abrogation of binding between PTPRS and CSPGs and neurite outgrowth promotion. Binds SDC3 and mediates bone formation by recruiting and attaching osteoblasts/osteoblast precursors to the sites for new bone deposition. Binds ALK and promotes cell survival and cell proliferation through MAPK pathway activation. Inhibits proliferation and enhances differentiation of neural stem cells by inhibiting FGF2-induced fibroblast growth factor receptor signaling pathway. Mediates regulatory mechanisms in normal hemostasis and in hematopoietic regeneration and in maintaining the balance of myeloid and lymphoid regeneration. In addition may play a role in the female reproductive system, auditory response and the progesterone-induced decidualization pathway. The chain is Pleiotrophin from Bos taurus (Bovine).